Here is a 142-residue protein sequence, read N- to C-terminus: Hemoglobin subunit alpha-2 (142 aa).

The residue at position 1 (serine 1) is an N-acetylserine. The 142-residue stretch at 1-142 (SLSTKDKETV…LSRALSEKYR (142 aa)) folds into the Globin domain. Position 59 (histidine 59) interacts with O2. Histidine 88 is a heme b binding site.

Belongs to the globin family. Hb2 is a heterotetramer of two alpha-2 chains and two beta chains. In terms of tissue distribution, red blood cells.

In terms of biological role, involved in oxygen transport from gills to the various peripheral tissues. The chain is Hemoglobin subunit alpha-2 (hba2) from Trematomus newnesi (Dusky notothen).